Consider the following 101-residue polypeptide: uncharacterized protein (101 aa).

The next 2 helical transmembrane spans lie at 3-23 (IIGS…AIIF) and 68-88 (VIVL…IIVI).

The protein localises to the cell membrane. This is an uncharacterized protein from Ureaplasma parvum serovar 3 (strain ATCC 700970).